Here is a 67-residue protein sequence, read N- to C-terminus: Probable Sec-independent protein translocase protein TatE (67 aa).

The helical transmembrane segment at 4–21 (ISITKLLVVAALVVLLFG) threads the bilayer.

This sequence belongs to the TatA/E family. TatE subfamily.

The protein localises to the cell inner membrane. Functionally, part of the twin-arginine translocation (Tat) system that transports large folded proteins containing a characteristic twin-arginine motif in their signal peptide across membranes. TatE shares overlapping functions with TatA. This Enterobacter cloacae subsp. cloacae (strain ATCC 13047 / DSM 30054 / NBRC 13535 / NCTC 10005 / WDCM 00083 / NCDC 279-56) protein is Probable Sec-independent protein translocase protein TatE.